The primary structure comprises 308 residues: L-lactate dehydrogenase 2 (308 aa).

Residues valine 14, aspartate 35, tyrosine 65, and 79 to 80 (GA) contribute to the NAD(+) site. Arginine 88 provides a ligand contact to substrate. Serine 101 serves as a coordination point for NAD(+). 120-123 (NPVD) serves as a coordination point for substrate. Threonine 143 is an NAD(+) binding site. 148-151 (DTAR) is a binding site for substrate. Histidine 175 functions as the Proton acceptor in the catalytic mechanism. Threonine 225 is a substrate binding site.

It belongs to the LDH/MDH superfamily. LDH family. In terms of assembly, homotetramer.

It is found in the cytoplasm. The enzyme catalyses (S)-lactate + NAD(+) = pyruvate + NADH + H(+). It functions in the pathway fermentation; pyruvate fermentation to lactate; (S)-lactate from pyruvate: step 1/1. In terms of biological role, catalyzes the conversion of lactate to pyruvate. The polypeptide is L-lactate dehydrogenase 2 (Lactobacillus johnsonii (strain CNCM I-12250 / La1 / NCC 533)).